Here is a 242-residue protein sequence, read N- to C-terminus: 3-dehydroquinate dehydratase (242 aa).

Residues 39-41 (EVR) and Arg-73 each bind 3-dehydroquinate. The Proton donor/acceptor role is filled by His-135. Lys-162 serves as the catalytic Schiff-base intermediate with substrate. 2 residues coordinate 3-dehydroquinate: Arg-203 and Gln-228.

It belongs to the type-I 3-dehydroquinase family. As to quaternary structure, homodimer.

The catalysed reaction is 3-dehydroquinate = 3-dehydroshikimate + H2O. It participates in metabolic intermediate biosynthesis; chorismate biosynthesis; chorismate from D-erythrose 4-phosphate and phosphoenolpyruvate: step 3/7. Functionally, involved in the third step of the chorismate pathway, which leads to the biosynthesis of aromatic amino acids. Catalyzes the cis-dehydration of 3-dehydroquinate (DHQ) and introduces the first double bond of the aromatic ring to yield 3-dehydroshikimate. The polypeptide is 3-dehydroquinate dehydratase (Methanosarcina acetivorans (strain ATCC 35395 / DSM 2834 / JCM 12185 / C2A)).